Reading from the N-terminus, the 110-residue chain is BolA-like protein 3 (110 aa).

The protein belongs to the BolA/IbaG family. In terms of assembly, interacts with NFU1.

It is found in the mitochondrion. Acts as a mitochondrial iron-sulfur (Fe-S) cluster assembly factor that facilitates (Fe-S) cluster insertion into a subset of mitochondrial proteins. Probably acts together with NFU1. The chain is BolA-like protein 3 (Bola3) from Mus musculus (Mouse).